Here is a 482-residue protein sequence, read N- to C-terminus: Scarecrow-like protein 3 (482 aa).

Residues 45–479 (LKPEERGLYL…RPLYSVSAWR (435 aa)) enclose the GRAS domain. The leucine repeat I (LRI) stretch occupies residues 52-115 (LYLIHLLLTC…ILKSWPGLYK (64 aa)). The tract at residues 134–199 (RRLFFEMFPI…EGPPHLRITG (66 aa)) is VHIID. A VHIID motif is present at residues 165–169 (VHVID). The leucine repeat II (LRII) stretch occupies residues 209 to 241 (QMAHRLIEEAEKLDIPFQFNPVVSRLDCLNVEQ). The PFYRE stretch occupies residues 250–401 (LAVSSVLQLH…KMLFGEEIKN (152 aa)). The disordered stretch occupies residues 302–324 (ENDMSNNNGYSPSGDSASSLPLP). Residues 305–324 (MSNNNGYSPSGDSASSLPLP) are compositionally biased toward polar residues. The segment at 404–479 (SCEGFERRER…RPLYSVSAWR (76 aa)) is SAW.

The protein belongs to the GRAS family. As to quaternary structure, binds to zinc finger proteins MGP/IDD3, IDD4, IDD5, BIB/IDD9 and JKD/IDD10. As to expression, expressed in seedlings, root epidermis, leaves, flowers and siliques.

Its subcellular location is the nucleus. Its function is as follows. Probable transcription factor involved in plant development. The polypeptide is Scarecrow-like protein 3 (Arabidopsis thaliana (Mouse-ear cress)).